Consider the following 245-residue polypeptide: MTNWKLEISYIGKDFYGFQKQPGKRTIQGELEKVLSFLFDEEIRVIGAGRTDTGVHALGQVVNFKSRGHKGFSCDKLHKVLNRLLPEDIKIKKVEIVDDSFHARYSAKRRWYIYVVYNNDERDLFLKDYSWWISREINRELLIFSANLFKGVHDFKNFCVTEDEDQTVIEVYESFWYFKKDLLIYFISAPFFLRKMVRFIVGSMVEIALGRKSLIELEDYLKEERKERFSVPAPPWGLYLFRVDY.

The Nucleophile role is filled by D52. Y112 contacts substrate.

This sequence belongs to the tRNA pseudouridine synthase TruA family. In terms of assembly, homodimer.

It catalyses the reaction uridine(38/39/40) in tRNA = pseudouridine(38/39/40) in tRNA. In terms of biological role, formation of pseudouridine at positions 38, 39 and 40 in the anticodon stem and loop of transfer RNAs. The sequence is that of tRNA pseudouridine synthase A from Dictyoglomus turgidum (strain DSM 6724 / Z-1310).